The following is a 106-amino-acid chain: ATP-dependent Clp protease adapter protein ClpS (106 aa).

Over residues 1–13 (MGNNSTWSQSENL) the composition is skewed to polar residues. The interval 1–21 (MGNNSTWSQSENLTADKQKEK) is disordered.

This sequence belongs to the ClpS family. Binds to the N-terminal domain of the chaperone ClpA.

In terms of biological role, involved in the modulation of the specificity of the ClpAP-mediated ATP-dependent protein degradation. The chain is ATP-dependent Clp protease adapter protein ClpS from Pectobacterium carotovorum subsp. carotovorum (strain PC1).